The sequence spans 337 residues: DNA-directed RNA polymerase subunit alpha (337 aa).

Positions 1 to 233 (MVREKVTVST…DLFIPFLHME (233 aa)) are alpha N-terminal domain (alpha-NTD). The segment at 264 to 337 (NKKIALKSIF…FVIDLAKNKF (74 aa)) is alpha C-terminal domain (alpha-CTD).

This sequence belongs to the RNA polymerase alpha chain family. In plastids the minimal PEP RNA polymerase catalytic core is composed of four subunits: alpha, beta, beta', and beta''. When a (nuclear-encoded) sigma factor is associated with the core the holoenzyme is formed, which can initiate transcription.

The protein resides in the plastid. It is found in the chloroplast. It carries out the reaction RNA(n) + a ribonucleoside 5'-triphosphate = RNA(n+1) + diphosphate. DNA-dependent RNA polymerase catalyzes the transcription of DNA into RNA using the four ribonucleoside triphosphates as substrates. The chain is DNA-directed RNA polymerase subunit alpha from Atropa belladonna (Belladonna).